The primary structure comprises 512 residues: Lysine--tRNA ligase (512 aa).

Positions 408 and 415 each coordinate Mg(2+).

The protein belongs to the class-II aminoacyl-tRNA synthetase family. Homodimer. Mg(2+) is required as a cofactor.

It localises to the cytoplasm. It catalyses the reaction tRNA(Lys) + L-lysine + ATP = L-lysyl-tRNA(Lys) + AMP + diphosphate. This Prochlorococcus marinus (strain MIT 9215) protein is Lysine--tRNA ligase.